The chain runs to 220 residues: Putative F-box protein At3g20705 (220 aa).

Positions 1-51 (MMMMSNLPNDLVEEILSRVTVTFMRTVRSICKKWNALTKDRSFTNKYIRNI) constitute an F-box domain.

The chain is Putative F-box protein At3g20705 from Arabidopsis thaliana (Mouse-ear cress).